Consider the following 307-residue polypeptide: Mitochondrial brown fat uncoupling protein 1 (307 aa).

Residues 1-10 (MVSLTTSEVH) lie on the Mitochondrial intermembrane side of the membrane. Residues 11–32 (PTMGVKTFSAGISACLADIITF) form a helical membrane-spanning segment. 3 Solcar repeats span residues 11–102 (PTMG…VQEY), 111–201 (PTLG…MKGA), and 210–295 (DDVP…LKKE). The Mitochondrial matrix portion of the chain corresponds to 33–73 (PLDTAKVRLQIQGEGQTSSTIRYKGVLGTITTLAKTEGWPK). K56 contacts fatty acid 16:0. The helical transmembrane segment at 74–96 (LYSGLPAGIQRQISFASLRIGLY) threads the bilayer. Topologically, residues 97-116 (DTVQEYFSSGKETPPTLGNR) are mitochondrial intermembrane. The chain crosses the membrane as a helical span at residues 117 to 133 (ISAGLMTGGVAVFIGQP). The Mitochondrial matrix portion of the chain corresponds to 134 to 178 (TEVVKVRLQAQSHLHGIKPRYTGTYNAYRIIATTESFSTLWKGTT). The helical transmembrane segment at 179–195 (PNLMRNVIINRTELVTY) threads the bilayer. The Mitochondrial intermembrane segment spans residues 196-212 (DLMKGALVNNQILADDV). Residues 213 to 232 (PCHLLSALVAGFCTTFLASP) traverse the membrane as a helical segment. At 233 to 266 (ADVVKTRFINSLPGQYPSVPSCAMTMLTKEGPTA) the chain is on the mitochondrial matrix side. Cysteine sulfenic acid (-SOH) is present on C254. A helical transmembrane segment spans residues 267–289 (FFKGFVPSFLRLASWNVIMFVCF). K269 is a binding site for fatty acid 16:0. Residues 290 to 307 (EQLKKELMKSRQTMDCTT) lie on the Mitochondrial intermembrane side of the membrane.

This sequence belongs to the mitochondrial carrier (TC 2.A.29) family. Most probably functions as a monomer. Binds one purine nucleotide per monomer. However, has also been suggested to function as a homodimer or a homotetramer. Tightly associates with cardiolipin in the mitochondrion inner membrane; may stabilize and regulate its activity. Post-translationally, may undergo sulfenylation upon cold exposure. May increase the sensitivity of UCP1 thermogenic function to the activation by noradrenaline probably through structural effects. In terms of processing, may undergo ubiquitin-mediated proteasomal degradation.

Its subcellular location is the mitochondrion inner membrane. It carries out the reaction H(+)(in) = H(+)(out). Its activity is regulated as follows. Has no constitutive proton transporter activity and has to be activated by long-chain fatty acids/LCFAs. Inhibited by purine nucleotides. Both purine nucleotides and LCFAs bind the cytosolic side of the transporter and directly compete to activate or inhibit it. Activated by noradrenaline and reactive oxygen species. Despite lacking canonical translational encoding for selenocysteine, a small pool of the protein has been observed to selectively incorporate selenocysteine at 'Cys-254'. Selenocysteine-modified protein is highly sensitive to redox modification and may constitute a pool of protein highly sensitive to activation by elevated levels of reactive oxygen species (ROS). Its function is as follows. Mitochondrial protein responsible for thermogenic respiration, a specialized capacity of brown adipose tissue and beige fat that participates in non-shivering adaptive thermogenesis to temperature and diet variations and more generally to the regulation of energy balance. Functions as a long-chain fatty acid/LCFA and proton symporter, simultaneously transporting one LCFA and one proton through the inner mitochondrial membrane. However, LCFAs remaining associated with the transporter via their hydrophobic tails, it results in an apparent transport of protons activated by LCFAs. Thereby, dissipates the mitochondrial proton gradient and converts the energy of substrate oxydation into heat instead of ATP. Regulates the production of reactive oxygen species/ROS by mitochondria. This is Mitochondrial brown fat uncoupling protein 1 from Dicrostonyx groenlandicus (Northern collared lemming).